We begin with the raw amino-acid sequence, 1127 residues long: Caprin-2 (1127 aa).

The disordered stretch occupies residues 67–108 (YQSPSGHSEEEREGNMKSAKPQVNHSQHGESQRALSPLQSTL). Over residues 99–108 (RALSPLQSTL) the composition is skewed to polar residues. Coiled coils occupy residues 129-156 (LKHKIRNIEKKKLKLEDYKDRLKSGEHL) and 194-216 (AQKKAQRREHMLKLEAEKKKLRT). Disordered stretches follow at residues 382-614 (NKQG…KDPV), 642-753 (DKPS…SSSV), and 922-975 (QCYK…PVDV). Composition is skewed to basic and acidic residues over residues 402 to 432 (KRWDMLTEPDGQEKKQESFKSWEASGKHQEV) and 440 to 464 (EQRKQDTSKLRSTLPEEQKKQEISK). 2 stretches are compositionally biased toward polar residues: residues 512 to 531 (PKSWTPSMQSEQNTTKSWTT) and 544 to 567 (TPKSWENNVESQKHSLTSQSQISP). Positions 588 to 597 (LNTEPKDVPK) are enriched in basic and acidic residues. 2 stretches are compositionally biased toward polar residues: residues 665–714 (KEQN…TSET) and 741–753 (QGFQSPPASSSSV). Phosphoserine is present on residues Ser948 and Ser949. Over residues 956–970 (TFNSGDSGQGDSRSM) the composition is skewed to polar residues. The 135-residue stretch at 993-1127 (PQQMRVAFSA…TFSGYLLYQD (135 aa)) folds into the C1q domain. Ca(2+) contacts are provided by Asp1078 and Glu1084.

Belongs to the caprin family. As to quaternary structure, homotrimer; via C1q domain. Found in a complex with LRP6, CCNY and CDK14 during G2/M stage; CAPRIN2 functions as a scaffold for the complex by binding to CCNY via its N terminus and to CDK14 via its C terminus. Interacts with LRP5. Interacts with LRP6. As to expression, detected in all tissues tested with highest levels of expression in brain and spleen.

It is found in the cytoplasm. Its subcellular location is the mitochondrion. The protein localises to the cell membrane. Promotes phosphorylation of the Wnt coreceptor LRP6, leading to increased activity of the canonical Wnt signaling pathway. Facilitates constitutive LRP6 phosphorylation by CDK14/CCNY during G2/M stage of the cell cycle, which may potentiate cells for Wnt signaling. May regulate the transport and translation of mRNAs, modulating for instance the expression of proteins involved in synaptic plasticity in neurons. Involved in regulation of growth as erythroblasts shift from a highly proliferative state towards their terminal phase of differentiation. May be involved in apoptosis. This chain is Caprin-2, found in Homo sapiens (Human).